Reading from the N-terminus, the 689-residue chain is Glycine--tRNA ligase beta subunit (689 aa).

Belongs to the class-II aminoacyl-tRNA synthetase family. Tetramer of two alpha and two beta subunits.

It localises to the cytoplasm. The catalysed reaction is tRNA(Gly) + glycine + ATP = glycyl-tRNA(Gly) + AMP + diphosphate. The chain is Glycine--tRNA ligase beta subunit from Shewanella baltica (strain OS195).